Here is a 415-residue protein sequence, read N- to C-terminus: Serine hydroxymethyltransferase (415 aa).

(6S)-5,6,7,8-tetrahydrofolate is bound by residues L117 and 121 to 123; that span reads GHL. Position 226 is an N6-(pyridoxal phosphate)lysine (K226). E241 provides a ligand contact to (6S)-5,6,7,8-tetrahydrofolate.

Belongs to the SHMT family. Homodimer. Pyridoxal 5'-phosphate is required as a cofactor.

It localises to the cytoplasm. It catalyses the reaction (6R)-5,10-methylene-5,6,7,8-tetrahydrofolate + glycine + H2O = (6S)-5,6,7,8-tetrahydrofolate + L-serine. The protein operates within one-carbon metabolism; tetrahydrofolate interconversion. Its pathway is amino-acid biosynthesis; glycine biosynthesis; glycine from L-serine: step 1/1. Its function is as follows. Catalyzes the reversible interconversion of serine and glycine with tetrahydrofolate (THF) serving as the one-carbon carrier. This reaction serves as the major source of one-carbon groups required for the biosynthesis of purines, thymidylate, methionine, and other important biomolecules. Also exhibits THF-independent aldolase activity toward beta-hydroxyamino acids, producing glycine and aldehydes, via a retro-aldol mechanism. The sequence is that of Serine hydroxymethyltransferase from Bacillus subtilis (strain 168).